Consider the following 273-residue polypeptide: Dermonecrotic toxin LsaSicTox-alphaIB1avi (273 aa).

His-5 is a catalytic residue. Mg(2+) is bound by residues Glu-25 and Asp-27. His-41 acts as the Nucleophile in catalysis. Cystine bridges form between Cys-45–Cys-51 and Cys-47–Cys-190. Asp-85 contacts Mg(2+).

It belongs to the arthropod phospholipase D family. Class II subfamily. The cofactor is Mg(2+). Expressed by the venom gland.

The protein localises to the secreted. The catalysed reaction is an N-(acyl)-sphingosylphosphocholine = an N-(acyl)-sphingosyl-1,3-cyclic phosphate + choline. The enzyme catalyses an N-(acyl)-sphingosylphosphoethanolamine = an N-(acyl)-sphingosyl-1,3-cyclic phosphate + ethanolamine. It catalyses the reaction a 1-acyl-sn-glycero-3-phosphocholine = a 1-acyl-sn-glycero-2,3-cyclic phosphate + choline. It carries out the reaction a 1-acyl-sn-glycero-3-phosphoethanolamine = a 1-acyl-sn-glycero-2,3-cyclic phosphate + ethanolamine. Functionally, dermonecrotic toxins cleave the phosphodiester linkage between the phosphate and headgroup of certain phospholipids (sphingolipid and lysolipid substrates), forming an alcohol (often choline) and a cyclic phosphate. This toxin acts on sphingomyelin (SM). It may also act on ceramide phosphoethanolamine (CPE), lysophosphatidylcholine (LPC) and lysophosphatidylethanolamine (LPE), but not on lysophosphatidylserine (LPS), and lysophosphatidylglycerol (LPG). It acts by transphosphatidylation, releasing exclusively cyclic phosphate products as second products. Induces dermonecrosis, hemolysis, increased vascular permeability, edema, inflammatory response, and platelet aggregation. This Loxosceles sabina (Tucson recluse spider) protein is Dermonecrotic toxin LsaSicTox-alphaIB1avi.